Consider the following 369-residue polypeptide: Transaldolase (369 aa).

Lys140 serves as the catalytic Schiff-base intermediate with substrate.

The protein belongs to the transaldolase family. Type 2 subfamily.

Its subcellular location is the cytoplasm. It catalyses the reaction D-sedoheptulose 7-phosphate + D-glyceraldehyde 3-phosphate = D-erythrose 4-phosphate + beta-D-fructose 6-phosphate. It functions in the pathway carbohydrate degradation; pentose phosphate pathway; D-glyceraldehyde 3-phosphate and beta-D-fructose 6-phosphate from D-ribose 5-phosphate and D-xylulose 5-phosphate (non-oxidative stage): step 2/3. Functionally, transaldolase is important for the balance of metabolites in the pentose-phosphate pathway. This Parafrankia sp. (strain EAN1pec) protein is Transaldolase.